A 103-amino-acid chain; its full sequence is Pyrimidine/purine nucleoside phosphorylase (103 aa).

It belongs to the nucleoside phosphorylase PpnP family.

The catalysed reaction is a purine D-ribonucleoside + phosphate = a purine nucleobase + alpha-D-ribose 1-phosphate. It carries out the reaction adenosine + phosphate = alpha-D-ribose 1-phosphate + adenine. The enzyme catalyses cytidine + phosphate = cytosine + alpha-D-ribose 1-phosphate. It catalyses the reaction guanosine + phosphate = alpha-D-ribose 1-phosphate + guanine. The catalysed reaction is inosine + phosphate = alpha-D-ribose 1-phosphate + hypoxanthine. It carries out the reaction thymidine + phosphate = 2-deoxy-alpha-D-ribose 1-phosphate + thymine. The enzyme catalyses uridine + phosphate = alpha-D-ribose 1-phosphate + uracil. It catalyses the reaction xanthosine + phosphate = alpha-D-ribose 1-phosphate + xanthine. Functionally, catalyzes the phosphorolysis of diverse nucleosides, yielding D-ribose 1-phosphate and the respective free bases. Can use uridine, adenosine, guanosine, cytidine, thymidine, inosine and xanthosine as substrates. Also catalyzes the reverse reactions. The chain is Pyrimidine/purine nucleoside phosphorylase from Shewanella baltica (strain OS155 / ATCC BAA-1091).